The following is a 237-amino-acid chain: Probable transcriptional regulatory protein WS1016 (237 aa).

Belongs to the TACO1 family.

Its subcellular location is the cytoplasm. The polypeptide is Probable transcriptional regulatory protein WS1016 (Wolinella succinogenes (strain ATCC 29543 / DSM 1740 / CCUG 13145 / JCM 31913 / LMG 7466 / NCTC 11488 / FDC 602W) (Vibrio succinogenes)).